The chain runs to 290 residues: ATP synthase gamma chain (290 aa).

Belongs to the ATPase gamma chain family. F-type ATPases have 2 components, CF(1) - the catalytic core - and CF(0) - the membrane proton channel. CF(1) has five subunits: alpha(3), beta(3), gamma(1), delta(1), epsilon(1). CF(0) has three main subunits: a, b and c.

The protein resides in the cell membrane. Produces ATP from ADP in the presence of a proton gradient across the membrane. The gamma chain is believed to be important in regulating ATPase activity and the flow of protons through the CF(0) complex. The sequence is that of ATP synthase gamma chain from Akkermansia muciniphila (strain ATCC BAA-835 / DSM 22959 / JCM 33894 / BCRC 81048 / CCUG 64013 / CIP 107961 / Muc).